The following is a 212-amino-acid chain: uncharacterized protein (212 aa).

Positions 53, 74, and 97 each coordinate S-adenosyl-L-methionine.

This sequence belongs to the methyltransferase superfamily. YrrT family.

Could be a S-adenosyl-L-methionine-dependent methyltransferase. This is an uncharacterized protein from Bacillus mycoides (strain KBAB4) (Bacillus weihenstephanensis).